The primary structure comprises 166 residues: Regulatory protein RecX (166 aa).

The protein belongs to the RecX family.

Its subcellular location is the cytoplasm. In terms of biological role, modulates RecA activity. The protein is Regulatory protein RecX of Salmonella newport (strain SL254).